The sequence spans 1047 residues: Probable phospholipid-transporting ATPase IIA (1047 aa).

An N-acetylthreonine modification is found at threonine 2. The Cytoplasmic segment spans residues 2–69 (TDNIPLQPVR…NQKYNFFTFL (68 aa)). A helical transmembrane segment spans residues 70–91 (PGVLFNQFKYFFNLYFLLLACS). Over 92 to 96 (QFVPE) the chain is Extracellular. A helical membrane pass occupies residues 97–119 (MRLGALYTYWVPLGFVLAVTVIR). Topologically, residues 120–303 (EAVEEIRCYV…GLFDLEVNCL (184 aa)) are cytoplasmic. Residues 304–325 (TKILFGALVVVSLVMVALQHFA) form a helical membrane-spanning segment. The Extracellular portion of the chain corresponds to 326-332 (GRWYLQI). Residues 333 to 354 (IRFLLLFSNIIPISLRVNLDMG) traverse the membrane as a helical segment. Topologically, residues 355 to 841 (KIVYSWVIRR…GRNSYKRSAA (487 aa)) are cytoplasmic. Aspartate 391 functions as the 4-aspartylphosphate intermediate in the catalytic mechanism. Aspartate 391, lysine 392, threonine 393, glutamate 502, phenylalanine 544, lysine 549, lysine 568, arginine 597, threonine 677, glycine 678, aspartate 679, arginine 759, and lysine 765 together coordinate ATP. Aspartate 391 is a binding site for Mg(2+). Position 393 (threonine 393) interacts with Mg(2+). Aspartate 785 is a Mg(2+) binding site. ATP contacts are provided by asparagine 788 and aspartate 789. Aspartate 789 is a binding site for Mg(2+). A helical transmembrane segment spans residues 842–862 (LSQFVIHRSLCISTMQAVFSS). Residues 863–874 (VFYFASVPLYQG) are Extracellular-facing. Residues 875-893 (FLIIGYSTIYTMFPVFSLV) form a helical membrane-spanning segment. Residues 894–923 (LDKDVKSEVAMLYPELYKDLLKGRPLSYKT) are Cytoplasmic-facing. The helical transmembrane segment at 924–942 (FLIWVLISIYQGSTIMYGA) threads the bilayer. Over 943–949 (LLLFESE) the chain is Extracellular. The chain crosses the membrane as a helical span at residues 950-972 (FVHIVAISFTSLILTELLMVALT). Residues 973-978 (IQTWHW) are Cytoplasmic-facing. Residues 979-999 (LMTVAELLSLACYIASLVFLH) traverse the membrane as a helical segment. At 1000-1006 (EFIDVYF) the chain is on the extracellular side. Residues 1007–1030 (IATLSFLWKVSVITLVSCLPLYVL) traverse the membrane as a helical segment. Residues 1031-1047 (KYLRRRFSPPSYSKLTS) lie on the Cytoplasmic side of the membrane.

Belongs to the cation transport ATPase (P-type) (TC 3.A.3) family. Type IV subfamily. In terms of assembly, heterotrimer with MON2 and DOP1B; this complex regulates SNX3-retromer mediated endosomal sorting of WLS. Interacts with RAB5A and RAB11A. Requires Mg(2+) as cofactor.

The protein localises to the early endosome membrane. It localises to the recycling endosome membrane. Its subcellular location is the late endosome membrane. It is found in the golgi apparatus. The protein resides in the trans-Golgi network membrane. The protein localises to the cell membrane. The enzyme catalyses ATP + H2O + phospholipidSide 1 = ADP + phosphate + phospholipidSide 2.. Functionally, plays a role in regulating membrane trafficking of cargo proteins, namely endosome to plasma membrane recycling, probably acting through RAB5 and RAB11 activation. Also involved in endosome to trans-Golgi network retrograde transport. In complex with MON2 and DOP1B, regulates SNX3 retromer-mediated endosomal sorting of WLS, a transporter of Wnt morphogens in developing tissues. Participates in the formation of endosomal carriers that direct WLS trafficking back to Golgi, away from lysosomal degradation. Appears to be implicated in intercellular communication by negatively regulating the release of exosomes. The flippase activity towards membrane lipids and its role in membrane asymmetry remains to be proved. Required for the maintenance of neurite morphology and synaptic transmission. The sequence is that of Probable phospholipid-transporting ATPase IIA from Homo sapiens (Human).